The primary structure comprises 691 residues: MLRGQEERKYSIRKYSIGVVSVLAATMFVVSSHEAQASEKTPTSNAAAQKETLNQPGEQGNAITSHQMQSGKQLDDMHKENGKSGTVTEGKDTLQSSKHQSTQNSKTIRTQNDNQVKQDSERQGSKQSHQNNATNNTERQNDQVQNTHHAERNGSQSTTSQSNDVDKSQPSIPAQKVLPNHDKAAPTSTTPPSNDKTAPKSTKAQDATTDKHPNQQDTHQPAHQIIDAKQDDTVRQSEQKPQVGDLSKHIDGQNSPEKPTDKNTDNKQLIKDALQAPKTRSTTNAAADAKKVRPLKANQVQPLNKYPVVFVHGFLGLVGDNAPALYPNYWGGNKFKVIEELRKQGYNVHQASVSAFGSNYDRAVELYYYIKGGRVDYGAAHAAKYGHERYGKTYKGIMPNWEPGKKVHLVGHSMGGQTIRLMEEFLRNGNKEEIAYHKAHGGEISPLFTGGHNNMVASITTLATPHNGSQAADKFGNTEAVRKIMFALNRFMGNKYSNIDLGLTQWGFKQLPNESYIDYIKRVSKSKIWTSDDNAAYDLTLDGSAKLNNMTSMNPNITYTTYTGVSSHTGPLGYENPDLGTFFLMDTTSRIIGHDAREEWRKNDGVVPVISSLHPSNQPFINVTNDEPATRRGIWQVKPIIQGWDHVDFIGVDFLDFKRKGAELANFYTGIINDLLRVEATESKGTQLKAS.

The signal sequence occupies residues 1–37 (MLRGQEERKYSIRKYSIGVVSVLAATMFVVSSHEAQA). A compositionally biased stretch (polar residues) spans 34–72 (EAQASEKTPTSNAAAQKETLNQPGEQGNAITSHQMQSGK). The tract at residues 34 to 267 (EAQASEKTPT…KPTDKNTDNK (234 aa)) is disordered. Positions 38–296 (SEKTPTSNAA…ADAKKVRPLK (259 aa)) are excised as a propeptide. Residues 73-82 (QLDDMHKENG) are compositionally biased toward basic and acidic residues. 3 stretches are compositionally biased toward polar residues: residues 83-115 (KSGT…NDNQ), 125-172 (SKQS…QPSI), and 186-207 (PTST…AQDA). Composition is skewed to basic and acidic residues over residues 226-238 (IDAK…RQSE) and 258-267 (KPTDKNTDNK). Residue Ser413 is the Nucleophile of the active site. Gly580 is a binding site for Ca(2+). Asp604 (charge relay system) is an active-site residue. Residue Asp645 coordinates Ca(2+). The Charge relay system role is filled by His646. 3 residues coordinate Ca(2+): Asp648, Asp653, and Asp656.

This sequence belongs to the AB hydrolase superfamily. Lipase family.

The protein resides in the secreted. The enzyme catalyses a triacylglycerol + H2O = a diacylglycerol + a fatty acid + H(+). The chain is Lipase 2 (lip2) from Staphylococcus aureus (strain Mu50 / ATCC 700699).